The following is a 238-amino-acid chain: MGRKWANIVAKKTAKDGATSKIYAKFGVEIYAAAKQGEPDPELNTSLKFVIERAKQAQVPKHVIDKAIDKAKGGGDETFVQGRYEGFGPNGSMIIAETLTSNVNRTIANVRTIFNKKGGNIGAAGSVSYMFDNTGVIVFKGTDPDHIFEILLEAEVDVRDVTEEEGNIVIYTEPADLHKGIAALKAAGITEFSTTELEMIAQSEVELSPEDLEIFEGLVDALEDDDDVQKVYHNVANL.

Belongs to the TACO1 family. YeeN subfamily.

It is found in the cytoplasm. This Shigella flexneri protein is Probable transcriptional regulatory protein YeeN.